The following is a 659-amino-acid chain: Protein SCARECROW 1 (659 aa).

2 disordered regions span residues 1-33 and 188-285; these read MGSS…ITSL and SDPA…KQRD. The span at 190 to 228 shows a compositional bias: pro residues; it reads PAPPPPPPPSHPALLPPDATAPPPPPTSVAALPPPPPPQ. Low complexity predominate over residues 258 to 271; that stretch reads AAAAAAAAAAALAA. Residues 258-289 adopt a coiled-coil conformation; sequence AAAAAAAAAAALAAAKERKEEQRRKQRDEEGL. Basic and acidic residues predominate over residues 272–285; that stretch reads AKERKEEQRRKQRD. The 371-residue stretch at 282–652 folds into the GRAS domain; that stretch reads KQRDEEGLHL…LCLLTASAWR (371 aa). The tract at residues 289–353 is leucine repeat I (LRI); sequence LHLLTLLLQC…VSSCLGLYAP (65 aa). The LxCxE motif motif lies at 296–300; it reads LQCAE. The VHIID stretch occupies residues 372 to 437; the sequence is FQVFNGISPF…GGPPRVRLTG (66 aa). The VHIID motif lies at 403–407; it reads VHIID. Positions 447–479 are leucine repeat II (LRII); it reads ATGKRLSDFADTLGLPFEFCPVADKAGNLDPEK. The PFYRE stretch occupies residues 488–575; sequence VAVHWLRHSL…QQLLSREIRN (88 aa). An SAW region spans residues 578-652; the sequence is AVGGPARTGD…LCLLTASAWR (75 aa).

The protein belongs to the GRAS family. In terms of assembly, interacts with SHR1, but not with SHR2.

It is found in the nucleus. Functionally, transcription factor required for quiescent center cells specification and maintenance of surrounding stem cells, and for the asymmetric cell division involved in radial pattern formation in roots. Essential for cell division but not differentiation of the ground tissue. Regulates the radial organization of the shoot axial organs. Restricts SHR movment and sequesters it into the nucleus of the endodermis. This chain is Protein SCARECROW 1 (SCR1), found in Oryza sativa subsp. indica (Rice).